Here is a 327-residue protein sequence, read N- to C-terminus: GTPase Obg (327 aa).

One can recognise an Obg domain in the interval 1–159 (MQFIDQANII…WEVQLELKLL (159 aa)). The region spanning 160–327 (AEVGIIGLPN…SLLFEVWKRI (168 aa)) is the OBG-type G domain. ATP-binding positions include 166–173 (GLPNAGKS), 191–195 (FTTLI), 213–216 (DIPG), 280–283 (NKME), and 309–311 (SSS). Positions 173 and 193 each coordinate Mg(2+).

Belongs to the TRAFAC class OBG-HflX-like GTPase superfamily. OBG GTPase family. Monomer. Requires Mg(2+) as cofactor.

It is found in the cytoplasm. In terms of biological role, an essential GTPase which binds GTP, GDP and possibly (p)ppGpp with moderate affinity, with high nucleotide exchange rates and a fairly low GTP hydrolysis rate. Plays a role in control of the cell cycle, stress response, ribosome biogenesis and in those bacteria that undergo differentiation, in morphogenesis control. In Prochlorococcus marinus (strain MIT 9312), this protein is GTPase Obg.